The primary structure comprises 98 residues: Essential MCU regulator, mitochondrial (98 aa).

Residues 52–72 (ITPFGLFGIIATVIPGLLIGA) form a helical membrane-spanning segment.

This sequence belongs to the SMDT1/EMRE family.

Its subcellular location is the mitochondrion inner membrane. Its function is as follows. Essential regulatory subunit of the mitochondrial calcium uniporter (mcu) channel, a protein that mediates calcium uptake into mitochondria. The polypeptide is Essential MCU regulator, mitochondrial (Anopheles gambiae (African malaria mosquito)).